The following is a 293-amino-acid chain: MEENLKGLYAALLVPFDENGQVKEEGLKAIAKNAIENEELDGLYVNGSSGENFLINTEQKKQIFKIAKEAVGDDVKMIAQIGSLDLNEAIELGKYATELGYDALSAVTPFYYPLSFEEIKQYYFDLIEATQNKMIIYSIPDLTGVNIDVDQFGELFNHEKIIGVKYTAPNFFLLERLRKAYPDKLIFSGFDEMLIQAVISGVDGAIGSTYNVNGKRSRQIFELAQQGKVDEAYQVQHETNDIIAKILELGLYPTLKEILKYRGIDSGLPKRPFAPFNEENRAALDELVNKYNL.

S48 and S49 together coordinate aceneuramate. The active-site Proton donor is Y137. Residue K165 is the Schiff-base intermediate with substrate of the active site. The aceneuramate site is built by T167, G189, D191, E192, and S208.

It belongs to the DapA family. NanA subfamily. As to quaternary structure, homotetramer.

It localises to the cytoplasm. It carries out the reaction aceneuramate = aldehydo-N-acetyl-D-mannosamine + pyruvate. The protein operates within amino-sugar metabolism; N-acetylneuraminate degradation; D-fructose 6-phosphate from N-acetylneuraminate: step 1/5. Catalyzes the reversible aldol cleavage of N-acetylneuraminic acid (sialic acid; Neu5Ac) to form pyruvate and N-acetylmannosamine (ManNAc) via a Schiff base intermediate. This chain is N-acetylneuraminate lyase, found in Staphylococcus carnosus (strain TM300).